Here is a 95-residue protein sequence, read N- to C-terminus: Large ribosomal subunit protein bL28 (95 aa).

The tract at residues 1-22 (MSRRCELTGKGPMTGNNVSHAN) is disordered.

Belongs to the bacterial ribosomal protein bL28 family.

This chain is Large ribosomal subunit protein bL28, found in Ruegeria pomeroyi (strain ATCC 700808 / DSM 15171 / DSS-3) (Silicibacter pomeroyi).